Here is a 937-residue protein sequence, read N- to C-terminus: Diacylglycerol kinase theta (937 aa).

The interval 1–48 is disordered; the sequence is MATAAESGARTWPGSGSPRLGSPAGSPVLGISGRARPGSGPERTGRAI. Phosphoserine is present on residues Ser22 and Ser26. 3 consecutive Phorbol-ester/DAG-type zinc fingers follow at residues 54–102, 115–162, and 177–228; these read GHSF…KTPC, AHCF…CSDC, and HHHW…TPEC. The segment at 359–378 is disordered; sequence GKAGTTEEETSKDSGPGDSV. One can recognise a Ras-associating domain in the interval 390–489; that stretch reads TQEILKIYPD…TRFYVAEARA (100 aa). 2 consecutive short sequence motifs (LXXLL motif) follow at residues 550-554 and 569-573; these read LYMLA and LPDVL. Residues 579-716 enclose the DAGKc domain; it reads PDCCPLLVFV…MDRWTILLDA (138 aa). Positions 911 to 937 are disordered; the sequence is AKQKPRKAGAIRDTRVDTLPAPEGNPL.

The protein belongs to the eukaryotic diacylglycerol kinase family. In terms of assembly, interacts with RHOA (constitutively activated, GTP-bound); the interaction inhibits DGKQ. Interacts with PRKCE. Interacts with PRKCH. Interacts with PLCB1. Interacts with NR5A1; the interaction requires both LXXLL motifs in DGKQ and is required for full phosphatidic acid-mediated activation of NR5A1. Phosphorylated by PRKCE and PRKCH in vitro. In terms of tissue distribution, widely expressed with higher expression in the brain and, to a lesser extent, in the small intestine, duodenum, and liver. In brain, expressed in gray matter. Expression is most intense in the cerebellar cortex and hippocampus, while moderate expression is seen in the olfactory bulb neuronal layers and brain stem nuclei. In the cerebellar cortex, equally expressed in both the Purkinje cell somata and the granule cells.

The protein resides in the cytoplasm. It localises to the cytosol. Its subcellular location is the cell membrane. The protein localises to the synapse. It is found in the cytoskeleton. The protein resides in the nucleus. It localises to the nucleus speckle. Its subcellular location is the nucleus matrix. The catalysed reaction is a 1,2-diacyl-sn-glycerol + ATP = a 1,2-diacyl-sn-glycero-3-phosphate + ADP + H(+). The enzyme catalyses a 1-O-alkyl-sn-glycerol + ATP = a 1-O-alkyl-sn-glycero-3-phosphate + ADP + H(+). It catalyses the reaction 1-O-alkyl-2-acyl-sn-glycerol + ATP = 1-O-alkyl-2-acyl-sn-glycero-3-phosphate + ADP + H(+). It carries out the reaction 1,2-di-(9Z-octadecenoyl)-sn-glycerol + ATP = 1,2-di-(9Z-octadecenoyl)-sn-glycero-3-phosphate + ADP + H(+). The catalysed reaction is 1-O-hexadecyl-sn-glycerol + ATP = 1-O-hexadecyl-sn-glycero-3-phosphate + ADP + H(+). The enzyme catalyses 1-O-hexadecyl-2-acetyl-sn-glycerol + ATP = 1-O-hexadecyl-2-acetyl-sn-glycero-3-phosphate + ADP + H(+). It catalyses the reaction 1-octadecanoyl-2-(5Z,8Z,11Z,14Z-eicosatetraenoyl)-sn-glycerol + ATP = 1-octadecanoyl-2-(5Z,8Z,11Z,14Z-eicosatetraenoyl)-sn-glycero-3-phosphate + ADP + H(+). It participates in lipid metabolism; glycerolipid metabolism. Activated by phosphatidylserine. Functionally, diacylglycerol kinase that converts diacylglycerol/DAG into phosphatidic acid/phosphatidate/PA and regulates the respective levels of these two bioactive lipids. Thereby, acts as a central switch between the signaling pathways activated by these second messengers with different cellular targets and opposite effects in numerous biological processes. Within the adrenocorticotropic hormone signaling pathway, produces phosphatidic acid which in turn activates NR5A1 and subsequent steroidogenic gene transcription. Also functions downstream of the nerve growth factor signaling pathway being specifically activated in the nucleus by the growth factor. Through its diacylglycerol activity also regulates synaptic vesicle endocytosis. This Rattus norvegicus (Rat) protein is Diacylglycerol kinase theta.